The following is a 48-amino-acid chain: Large ribosomal subunit protein bL33A (48 aa).

The protein belongs to the bacterial ribosomal protein bL33 family.

This Shouchella clausii (strain KSM-K16) (Alkalihalobacillus clausii) protein is Large ribosomal subunit protein bL33A.